A 502-amino-acid polypeptide reads, in one-letter code: Beta-amyrin 28-monooxygenase CYP716A379 (502 aa).

Residues 3–23 (LITLLSALLVLAIVSLSTFFV) traverse the membrane as a helical; Signal-anchor for type II membrane protein segment. Asn88 and Asn181 each carry an N-linked (GlcNAc...) asparagine glycan. Position 444 (Cys444) interacts with heme.

It belongs to the cytochrome P450 family. Requires heme as cofactor. In terms of tissue distribution, mainly expressed in flowers and flower buds, to a lesser extent in young leaves and, at low levels, in old leaves, stems and roots.

It is found in the membrane. It carries out the reaction beta-amyrin + 3 reduced [NADPH--hemoprotein reductase] + 3 O2 = oleanolate + 3 oxidized [NADPH--hemoprotein reductase] + 4 H2O + 4 H(+). It functions in the pathway secondary metabolite biosynthesis; terpenoid biosynthesis. Its function is as follows. Component of the oleanane-type triterpene saponins (e.g. saponarioside A and saponarioside B) biosynthetic pathway, leading to the production of natural products with detergent properties used as traditional sources of soap. An oxidoreductase that facilitates the oxidation of the methyl group to a carboxyl group at the C-28 position of beta-amyrin, resulting in the formation of oleanolic acid. Catalyzes also the subsequent oxidation of the methyl group to a&lt; carboxyl group at the C-16 alpha position of oleanolic acid, resulting in the formation of echinocystic acid. The chain is Beta-amyrin 28-monooxygenase CYP716A379 from Saponaria officinalis (Common soapwort).